The following is a 68-amino-acid chain: UPF0435 protein SA1696 (68 aa).

This sequence belongs to the UPF0435 family.

The sequence is that of UPF0435 protein SA1696 from Staphylococcus aureus (strain N315).